The sequence spans 476 residues: Sulfate adenylyltransferase subunit 1 (476 aa).

The 217-residue stretch at 24 to 240 (KSLLRFLTCG…LENVDIDRDK (217 aa)) folds into the tr-type G domain. Residues 33 to 40 (GSVDDGKS) form a G1 region. 33–40 (GSVDDGKS) is a binding site for GTP. The G2 stretch occupies residues 91-95 (GITID). The interval 112-115 (DTPG) is G3. GTP-binding positions include 112 to 116 (DTPGH) and 167 to 170 (NKMD). Positions 167–170 (NKMD) are G4. A G5 region spans residues 205–207 (SAL).

The protein belongs to the TRAFAC class translation factor GTPase superfamily. Classic translation factor GTPase family. CysN/NodQ subfamily. In terms of assembly, heterodimer composed of CysD, the smaller subunit, and CysN.

The enzyme catalyses sulfate + ATP + H(+) = adenosine 5'-phosphosulfate + diphosphate. It participates in sulfur metabolism; hydrogen sulfide biosynthesis; sulfite from sulfate: step 1/3. Functionally, with CysD forms the ATP sulfurylase (ATPS) that catalyzes the adenylation of sulfate producing adenosine 5'-phosphosulfate (APS) and diphosphate, the first enzymatic step in sulfur assimilation pathway. APS synthesis involves the formation of a high-energy phosphoric-sulfuric acid anhydride bond driven by GTP hydrolysis by CysN coupled to ATP hydrolysis by CysD. The polypeptide is Sulfate adenylyltransferase subunit 1 (Vibrio cholerae serotype O1 (strain ATCC 39541 / Classical Ogawa 395 / O395)).